Here is a 228-residue protein sequence, read N- to C-terminus: Ion-translocating oxidoreductase complex subunit E (228 aa).

A run of 5 helical transmembrane segments spans residues 18-38, 69-89, 92-112, 125-145, and 182-202; these read ALVQ…ATNA, IPIY…LINA, FGLY…CIVV, LLSA…MFVL, and PFLL…MLAV.

The protein belongs to the NqrDE/RnfAE family. As to quaternary structure, the complex is composed of six subunits: RnfA, RnfB, RnfC, RnfD, RnfE and RnfG.

It localises to the cell inner membrane. Part of a membrane-bound complex that couples electron transfer with translocation of ions across the membrane. The protein is Ion-translocating oxidoreductase complex subunit E of Cronobacter sakazakii (strain ATCC BAA-894) (Enterobacter sakazakii).